The chain runs to 720 residues: Putative fatty acid oxidation complex trifunctional enzyme (720 aa).

The 3-hydroxyacyl-CoA dehydrogenase stretch occupies residues 1–384; sequence MQNEIKKVCV…SWKYGPFELL (384 aa). The tract at residues 453 to 720 is enoyl-CoA hydratase/isomerase; sequence FVITTKMNCL…TIEKLKAIVK (268 aa).

This sequence in the N-terminal section; belongs to the 3-hydroxyacyl-CoA dehydrogenase family. In the C-terminal section; belongs to the enoyl-CoA hydratase/isomerase family.

It catalyses the reaction a (3S)-3-hydroxyacyl-CoA + NAD(+) = a 3-oxoacyl-CoA + NADH + H(+). The catalysed reaction is a (3S)-3-hydroxyacyl-CoA = a (2E)-enoyl-CoA + H2O. The enzyme catalyses a 4-saturated-(3S)-3-hydroxyacyl-CoA = a (3E)-enoyl-CoA + H2O. It carries out the reaction a (3Z)-enoyl-CoA = a 4-saturated (2E)-enoyl-CoA. It catalyses the reaction a (3E)-enoyl-CoA = a 4-saturated (2E)-enoyl-CoA. This Rickettsia felis (strain ATCC VR-1525 / URRWXCal2) (Rickettsia azadi) protein is Putative fatty acid oxidation complex trifunctional enzyme.